The following is a 78-amino-acid chain: MICOS complex subunit MIC10 (78 aa).

Residue S2 is modified to N-acetylserine. The chain crosses the membrane as a helical span at residues 17 to 36; that stretch reads AVVKIGTGFGLGIVFSLTFF. The Mitochondrial intermembrane segment spans residues 37-78; that stretch reads KRRMWPLAFGSGMGLGMAYSNCQHDFQAPYLLHGKYVKEQEQ.

The protein belongs to the MICOS complex subunit Mic10 family. Component of the mitochondrial contact site and cristae organizing system (MICOS) complex, composed of at least MICOS10/MIC10, CHCHD3/MIC19, CHCHD6/MIC25, APOOL/MIC27, IMMT/MIC60, APOO/MIC23/MIC26 and MICOS13/MIC13. This complex was also known under the names MINOS or MitOS complex. The MICOS complex associates with mitochondrial outer membrane proteins SAMM50, MTX1 and MTX2 (together described as components of the mitochondrial outer membrane sorting assembly machinery (SAM) complex) and DNAJC11, mitochondrial inner membrane protein TMEM11 and with HSPA9. The MICOS and SAM complexes together with DNAJC11 are part of a large protein complex spanning both membranes termed the mitochondrial intermembrane space bridging (MIB) complex. Interacts with IMMT/MIC60 and MICOS13/MIC13. Interacts with APOO/MIC23/MIC26 and APOOL/MIC27. Interacts with ARMC1.

The protein resides in the mitochondrion inner membrane. Component of the MICOS complex, a large protein complex of the mitochondrial inner membrane that plays crucial roles in the maintenance of crista junctions, inner membrane architecture, and formation of contact sites to the outer membrane. The chain is MICOS complex subunit MIC10 from Homo sapiens (Human).